The following is a 65-amino-acid chain: Large ribosomal subunit protein uL29 (65 aa).

This sequence belongs to the universal ribosomal protein uL29 family.

This chain is Large ribosomal subunit protein uL29, found in Buchnera aphidicola subsp. Schizaphis graminum (strain Sg).